A 325-amino-acid polypeptide reads, in one-letter code: D-xylose 1-dehydrogenase (NADP(+)) 2 (325 aa).

The signal sequence occupies residues 1 to 22 (MMFGILGTAGIGVKSVIPAVQA).

It belongs to the Gfo/Idh/MocA family. Homotetramer.

It is found in the secreted. It catalyses the reaction D-xylose + NADP(+) = D-xylono-1,5-lactone + NADPH + H(+). Functionally, NADP-dependent D-xylose dehydrogenase involved in the degradation of D-xylose, a major component of hemicelluloses such as xylan. Even if it shows D-xylose dehydrogenase activity, it is not essential for D-xylose degradation. The chain is D-xylose 1-dehydrogenase (NADP(+)) 2 from Haloferax volcanii (strain ATCC 29605 / DSM 3757 / JCM 8879 / NBRC 14742 / NCIMB 2012 / VKM B-1768 / DS2) (Halobacterium volcanii).